The sequence spans 555 residues: Solute carrier family 2, facilitated glucose transporter member 10 (555 aa).

The Cytoplasmic portion of the chain corresponds to 1–15; that stretch reads MGLSSPTLILAATVS. The helical transmembrane segment at 16–36 threads the bilayer; it reads LLGGIVFGYELGIISGALLVL. Over 37-48 the chain is Extracellular; the sequence is KTVYQLTCFEQE. The helical transmembrane segment at 49 to 69 threads the bilayer; sequence ALVSAVLFGALLASLIGGIII. Topologically, residues 70–82 are cytoplasmic; sequence DRWGRRTAILASN. The helical transmembrane segment at 83–103 threads the bilayer; it reads LVVLAGSIILIATSTFWWLIV. Over 104–105 the chain is Extracellular; it reads GR. The helical transmembrane segment at 106–126 threads the bilayer; that stretch reads VTIGFAISISSMACCIYVSEI. The Cytoplasmic segment spans residues 127–132; that stretch reads VRPHQR. Residues 133–153 form a helical membrane-spanning segment; the sequence is GMLVSLYETGITVGILISYAM. At 154–165 the chain is on the extracellular side; the sequence is NYFLSGVNESWK. N-linked (GlcNAc...) asparagine glycosylation is present at Asn161. A helical membrane pass occupies residues 166-186; it reads YMFGLAIVPAAFQFISILFLP. The Cytoplasmic portion of the chain corresponds to 187–240; sequence SKPHKLNFWEQDTDDGFIELEETGEAGEFKPDTYDRQYTFLDLFRSKDNMRTRT. Residues 241–261 traverse the membrane as a helical segment; sequence LLGLGLVLFQQFTGQPNVLYY. D-glucose is bound at residue 250 to 251; the sequence is QQ. Residues 262–277 lie on the Extracellular side of the membrane; sequence ASTIFQSVGFQSNSSA. Asn274 is a glycosylation site (N-linked (GlcNAc...) asparagine). A helical membrane pass occupies residues 278-298; sequence VLASVGLGVVKVASTLIAICF. The Cytoplasmic segment spans residues 299–305; it reads ADKAGRR. The helical transmembrane segment at 306 to 326 threads the bilayer; sequence ILLLAGCIVMTIAITGIGIVS. The Extracellular portion of the chain corresponds to 327-415; that stretch reads FTVKMDSHRD…ASPELPSNYT (89 aa). Asn344, Asn351, Asn400, and Asn413 each carry an N-linked (GlcNAc...) asparagine glycan. A helical transmembrane segment spans residues 416–436; that stretch reads ILNWITLLSMMAFVSAFSIGF. The Cytoplasmic portion of the chain corresponds to 437–464; it reads GPMTWIVLSEIYPADIRGRAFAFCNSFN. Trp441 contacts D-glucose. Residues 465–483 form a helical membrane-spanning segment; it reads WAANLLITLTFLDVIASIG. At 484-485 the chain is on the extracellular side; that stretch reads LS. The chain crosses the membrane as a helical span at residues 486–506; it reads WTFLLYGVVGLLAIAFIYFFI. Topologically, residues 507 to 555 are cytoplasmic; the sequence is PETKGQSLEEIDKQFSTKRILQKRETSKGVGKRPSSGPPYQRIGKASPS. The tract at residues 528-555 is disordered; the sequence is QKRETSKGVGKRPSSGPPYQRIGKASPS.

It belongs to the major facilitator superfamily. Sugar transporter (TC 2.A.1.1) family. Glucose transporter subfamily.

The protein resides in the endomembrane system. It localises to the cytoplasm. It is found in the perinuclear region. It carries out the reaction D-glucose(out) = D-glucose(in). In terms of biological role, facilitative glucose transporter required for the development of the cardiovascular system. In Xenopus tropicalis (Western clawed frog), this protein is Solute carrier family 2, facilitated glucose transporter member 10.